A 223-amino-acid polypeptide reads, in one-letter code: 2-C-methyl-D-erythritol 4-phosphate cytidylyltransferase (223 aa).

Belongs to the IspD/TarI cytidylyltransferase family. IspD subfamily.

It catalyses the reaction 2-C-methyl-D-erythritol 4-phosphate + CTP + H(+) = 4-CDP-2-C-methyl-D-erythritol + diphosphate. It functions in the pathway isoprenoid biosynthesis; isopentenyl diphosphate biosynthesis via DXP pathway; isopentenyl diphosphate from 1-deoxy-D-xylulose 5-phosphate: step 2/6. Catalyzes the formation of 4-diphosphocytidyl-2-C-methyl-D-erythritol from CTP and 2-C-methyl-D-erythritol 4-phosphate (MEP). In Prochlorococcus marinus (strain MIT 9301), this protein is 2-C-methyl-D-erythritol 4-phosphate cytidylyltransferase.